We begin with the raw amino-acid sequence, 229 residues long: Multiple organellar RNA editing factor 5, chloroplastic/mitochondrial (229 aa).

The transit peptide at 1–57 (MAKTLARSTASRITKRLISTSGATTPSPSYILSRRSTPVFSHAVGFISSLNRFTTIR) directs the protein to the chloroplast and mitochondrion.

Belongs to the MORF family. In terms of assembly, homodimer and heterodimers with MORF8/RIP1, MORF3/RIP3, MORF6/RIP6, MORF7/RIP7 and MORF9/RIP9.

Its subcellular location is the mitochondrion. It is found in the plastid. The protein resides in the chloroplast. Functionally, involved in organellar RNA editing. Required for the processing of few RNA editing sites in mitochondria. The protein is Multiple organellar RNA editing factor 5, chloroplastic/mitochondrial of Arabidopsis thaliana (Mouse-ear cress).